A 689-amino-acid chain; its full sequence is Glycine--tRNA ligase beta subunit (689 aa).

It belongs to the class-II aminoacyl-tRNA synthetase family. As to quaternary structure, tetramer of two alpha and two beta subunits.

It is found in the cytoplasm. It catalyses the reaction tRNA(Gly) + glycine + ATP = glycyl-tRNA(Gly) + AMP + diphosphate. The polypeptide is Glycine--tRNA ligase beta subunit (Salmonella heidelberg (strain SL476)).